A 717-amino-acid chain; its full sequence is Transport/processing ATP-binding protein ComA (717 aa).

The region spanning 11 to 138 (QVDQMDCGVA…EEWTGVTLFM (128 aa)) is the Peptidase C39 domain. Cysteine 17 is an active-site residue. 7 helical membrane-spanning segments follow: residues 18 to 38 (GVASLAMVFGYYGSYYFLAHL), 166 to 186 (GLIANIVLATLLVTVINIVGS), 205 to 225 (LGIISIGLVIVYILQQILSYA), 237 to 257 (LSIDVILSYIKHVFHLPMSFF), 281 to 301 (STILSIFLDVSTVVIISLVLF), 306 to 326 (NLFFMTLLALPIYTVIIFAFM), and 397 to 417 (VAHLLLNVGILWMGAVLVMDG). In terms of domain architecture, ABC transmembrane type-1 spans 168 to 450 (IANIVLATLL…IINLQTKLQT (283 aa)). The 234-residue stretch at 484–717 (MTFKQVHYKY…GGFYAHLVNS (234 aa)) folds into the ABC transporter domain. 517-524 (GISGSGKT) contributes to the ATP binding site.

The protein belongs to the ABC transporter superfamily. HlyB family.

It is found in the cell membrane. Its function is as follows. Required for induction of competence. Seems to transport the competence-stimulating peptide (CSP). This chain is Transport/processing ATP-binding protein ComA (comA), found in Streptococcus pneumoniae (strain ATCC BAA-255 / R6).